The following is a 403-amino-acid chain: tRNA pseudouridine synthase D (403 aa).

Residues 1–10 show a composition bias toward basic and acidic residues; that stretch reads MTVQVQDHDI. Residues 1 to 24 are disordered; it reads MTVQVQDHDITTAADTAKLPQPMQ. The Nucleophile role is filled by Asp-92. The region spanning 192 to 354 is the TRUD domain; the sequence is GVPNYFGPQR…IKAQRRALRL (163 aa). The disordered stretch occupies residues 217–240; it reads ARPVPESRPQPNKGKRKRVPREQN.

It belongs to the pseudouridine synthase TruD family.

The catalysed reaction is uridine(13) in tRNA = pseudouridine(13) in tRNA. Functionally, responsible for synthesis of pseudouridine from uracil-13 in transfer RNAs. This is tRNA pseudouridine synthase D from Psychrobacter arcticus (strain DSM 17307 / VKM B-2377 / 273-4).